The primary structure comprises 1461 residues: Periaxin (1461 aa).

Ser-7 is subject to Phosphoserine. The region spanning 16 to 99 (LVEIIVETEA…YKVSFCLKRT (84 aa)) is the PDZ domain. Residues 70-84 (VFFENFKYEDALRLL) carry the Nuclear export signal motif. Positions 118-196 (KGPRAKVAKL…RLQLPRLRVR (79 aa)) match the Nuclear localization signal motif. Ser-133 carries the phosphoserine modification. 55 repeat units span residues 431 to 435 (GPEVK), 439 to 443 (GPEVK), 447 to 451 (APEVK), 455 to 459 (VPEAA), 463 to 467 (VRLPE), 468 to 472 (VELPK), 473 to 477 (VSEMK), 481 to 485 (VPEMA), 486 to 490 (VPEVR), 494 to 498 (VELPK), 499 to 503 (VSEMK), 507 to 511 (VPEMA), 512 to 516 (VPEVR), 520 to 524 (VQLLK), 525 to 529 (VSEMK), 533 to 537 (VPEMA), 538 to 542 (VPEVR), 546 to 550 (VQLPK), 551 to 555 (VSEMK), 559 to 563 (VSEVA), 564 to 568 (VPEVR), 572 to 576 (VQLPK), 577 to 581 (VPEMK), 582 to 586 (VPEMK), 590 to 594 (VPEMK), 595 to 599 (LPEMK), 600 to 604 (LPEVQ), 608 to 612 (VPEMA), 613 to 617 (VPDVH), 618 to 622 (LPEVQ), 626 to 630 (VPEMK), 631 to 635 (LPEMK), 636 to 640 (LPEVK), 644 to 648 (VPEMA), 649 to 653 (VPDVH), 654 to 658 (LPEVQ), 662 to 666 (VPEMK), 670 to 674 (MPEMA), 675 to 679 (VPEVR), 683 to 687 (VQLPK), 688 to 692 (VSEMK), 696 to 700 (VPEMA), 701 to 705 (VPDVH), 706 to 710 (LPEVQ), 714 to 718 (VCEMK), 719 to 723 (VPDMK), 724 to 728 (LPEIK), 732 to 736 (VPEMA), 737 to 741 (VPDVH), 742 to 746 (LPEVQ), 750 to 754 (VSEIR), 755 to 759 (LPEMQ), 760 to 764 (VPKVP), 771 to 775 (APEVK), and 779 to 783 (APEVQ). The segment at 431–783 (GPEVKVPKGP…VKLPRAPEVQ (353 aa)) is 55 X 5 AA approximate tandem repeats of [LVMAG]-[PSREQC]-[EDKL]-[LIVMAP]-[AQKHRPE]; that may have a tripeptide spacer of [LV]-P-[KER]. Ser-900 and Ser-1082 each carry phosphoserine. Over residues 1318 to 1327 (EGAEEGEKAK) the composition is skewed to basic and acidic residues. Positions 1318-1461 (EGAEEGEKAK…RMEGAQAAAV (144 aa)) are disordered. Ser-1349, Ser-1351, Ser-1363, Ser-1401, Ser-1407, and Ser-1439 each carry phosphoserine. Residues 1352-1363 (PEEEEEEEEEGS) show a composition bias toward acidic residues.

This sequence belongs to the periaxin family. Homodimer (via PDZ domain). Interacts with SCN10A. Found in a complex with SCN10A. Interacts with DRP2. Identified in a dystroglycan complex that contains at least PRX, DRP2, UTRN, DMD and DAG1. Detected in a complex composed of at least EZR, AHNAK, PPL and PRX. Identified in a complex with EZR, AHNAK, BFSP1, BFSP2, ANK2, PLEC, VIM and spectrin. As to expression, detected in spinal cord. Isoform 1 and isoform 2 are found in sciatic nerve and Schwann cells.

The protein resides in the cell membrane. The protein localises to the nucleus. It is found in the cytoplasm. It localises to the cell junction. Functionally, scaffolding protein that functions as part of a dystroglycan complex in Schwann cells, and as part of EZR and AHNAK-containing complexes in eye lens fiber cells. Required for the maintenance of the peripheral myelin sheath that is essential for normal transmission of nerve impulses and normal perception of sensory stimuli. Required for normal transport of MBP mRNA from the perinuclear to the paranodal regions. Required for normal remyelination after nerve injury. Required for normal elongation of Schwann cells and normal length of the internodes between the nodes of Ranvier. The demyelinated nodes of Ranvier permit saltatory transmission of nerve impulses; shorter internodes cause slower transmission of nerve impulses. Required for the formation of appositions between the abaxonal surface of the myelin sheath and the Schwann cell plasma membrane; the Schwann cell cytoplasm is restricted to regions between these appositions. Required for the formation of Cajal bands and of Schmidt-Lanterman incisures that correspond to short, cytoplasm-filled regions on myelinated nerves. Recruits DRP2 to the Schwann cell plasma membrane. Required for normal protein composition of the eye lens fiber cell plasma membrane and normal eye lens fiber cell morphology. The protein is Periaxin (PRX) of Homo sapiens (Human).